The following is a 315-amino-acid chain: DNA-directed RNA polymerase subunit alpha (315 aa).

The tract at residues 1-227 is alpha N-terminal domain (alpha-NTD); sequence MTQFQIECVE…NLFNPFKKIN (227 aa). The alpha C-terminal domain (alpha-CTD) stretch occupies residues 239 to 315; that stretch reads EDKISQIPIE…PKRKTNKKEN (77 aa).

Belongs to the RNA polymerase alpha chain family. As to quaternary structure, in plastids the minimal PEP RNA polymerase catalytic core is composed of four subunits: alpha, beta, beta', and beta''. When a (nuclear-encoded) sigma factor is associated with the core the holoenzyme is formed, which can initiate transcription.

It localises to the plastid. The protein localises to the cyanelle. It carries out the reaction RNA(n) + a ribonucleoside 5'-triphosphate = RNA(n+1) + diphosphate. Its function is as follows. DNA-dependent RNA polymerase catalyzes the transcription of DNA into RNA using the four ribonucleoside triphosphates as substrates. This chain is DNA-directed RNA polymerase subunit alpha, found in Cyanophora paradoxa.